Here is a 232-residue protein sequence, read N- to C-terminus: Ubiquinone biosynthesis O-methyltransferase (232 aa).

Positions 36, 55, 76, and 120 each coordinate S-adenosyl-L-methionine.

Belongs to the methyltransferase superfamily. UbiG/COQ3 family.

The catalysed reaction is a 3-demethylubiquinol + S-adenosyl-L-methionine = a ubiquinol + S-adenosyl-L-homocysteine + H(+). The enzyme catalyses a 3-(all-trans-polyprenyl)benzene-1,2-diol + S-adenosyl-L-methionine = a 2-methoxy-6-(all-trans-polyprenyl)phenol + S-adenosyl-L-homocysteine + H(+). It participates in cofactor biosynthesis; ubiquinone biosynthesis. Functionally, O-methyltransferase that catalyzes the 2 O-methylation steps in the ubiquinone biosynthetic pathway. The protein is Ubiquinone biosynthesis O-methyltransferase of Pseudomonas savastanoi pv. phaseolicola (strain 1448A / Race 6) (Pseudomonas syringae pv. phaseolicola (strain 1448A / Race 6)).